The primary structure comprises 65 residues: SCOCO-like protein 1 (65 aa).

Residues 8-44 are a coiled coil; sequence RSLMEQKAMELQQQLQALLDEIDQNKQESENISRESE.

This sequence belongs to the SLO1 family.

The chain is SCOCO-like protein 1 from Schizosaccharomyces pombe (strain 972 / ATCC 24843) (Fission yeast).